The chain runs to 447 residues: Probable arabinosyltransferase ARAD1 (447 aa).

The Cytoplasmic segment spans residues 1–6 (MARKSS). Residues 7 to 29 (LLKRAAIAVVSVIAIYVILNASV) form a helical; Signal-anchor for type II membrane protein membrane-spanning segment. At 30 to 447 (SRSLPSSSDL…TNQTGLITSI (418 aa)) the chain is on the lumenal side. Positions 32-41 (SLPSSSDLPR) are enriched in low complexity. The segment at 32 to 52 (SLPSSSDLPRQLIREDDDDEG) is disordered. Asn-427, Asn-432, and Asn-439 each carry an N-linked (GlcNAc...) asparagine glycan.

Belongs to the glycosyltransferase 47 family. As to quaternary structure, homodimer and heterodimer with ARAD2. In terms of tissue distribution, expressed in root vasculature, cotyledons, leaves, stems, vascular tissue of sepals, petals and stamens, pollen grains, mature siliques and abscission region of seeds.

The protein resides in the golgi apparatus membrane. Its function is as follows. Probable arabinosyl transferase responsible for the polymerization of arabinose into the arabinan of arabinogalactan. May function as inverting enzyme using UDP-beta-L-arabinopyranoside. May be important for arabinan side chains of rhamnogalacturonan I (RG-I), a major component of pectins. Cell wall pectic arabinans are involved in thigmomorphogenesis response of inflorescence stems to mechanical stress. In Arabidopsis thaliana (Mouse-ear cress), this protein is Probable arabinosyltransferase ARAD1 (ARAD1).